A 193-amino-acid polypeptide reads, in one-letter code: MNNVIRPALVLFALLSALTGLAYPLAVTGAAKALFPSQAAGSLVVQGGTTVGSSLIGQNFGDPKHFWGRPSATAPQPYNASASGGSNLGPLNPALADAVKQRIEALRAADPGNAAAVPVDLVTASASGLDPDISPAAAHYQAARVARLRGLPPEQVNALVASHTQAPLWGWLGEPRVNVLALNLALDASAAAR.

A helical transmembrane segment spans residues 7 to 27 (PALVLFALLSALTGLAYPLAV).

It belongs to the KdpC family. As to quaternary structure, the system is composed of three essential subunits: KdpA, KdpB and KdpC.

Its subcellular location is the cell inner membrane. Functionally, part of the high-affinity ATP-driven potassium transport (or Kdp) system, which catalyzes the hydrolysis of ATP coupled with the electrogenic transport of potassium into the cytoplasm. This subunit acts as a catalytic chaperone that increases the ATP-binding affinity of the ATP-hydrolyzing subunit KdpB by the formation of a transient KdpB/KdpC/ATP ternary complex. This Variovorax paradoxus (strain S110) protein is Potassium-transporting ATPase KdpC subunit.